The following is a 248-amino-acid chain: UPF0246 protein RPR_00055 (248 aa).

The protein belongs to the UPF0246 family.

This is UPF0246 protein RPR_00055 from Rickettsia peacockii (strain Rustic).